A 371-amino-acid polypeptide reads, in one-letter code: MGHKVVVFDISVIRALWETRVKKHKAWQKKEVERLEKSALEKIKEEWNFVAECRRKGIPQAVYCKNGFIDTSVRLLDKIERNTLTRQSSLPKDRGKRSSAFVFELSGEHWTELPDSLKEQTHLREWYISNTLIQIIPTYIQLFQAMRILDLPKNQISHLPAEIGCLKNLKELNVGFNYLKSIPPELGDCENLERLDCSGNLELMELPFELSNLKQVTFVDISANKFSSVPICVLRMSNLQWLDISSNNLTDLPQDIDRLEELQSFLLYKNKLTYLPYSMLNLKKLTLLVVSGDHLVELPTALCDSSTPLKFVSLMDNPIDNAQCEDGNEIMESERDRQHFDKEVMKAYIEDLKERESVPSYTTKVSFSLQL.

LRR repeat units lie at residues 122-143, 145-166, 168-189, 191-214, 215-235, 238-260, 261-283, 284-305, and 308-329; these read HLREWYISNTLIQIIPTYIQLF, AMRILDLPKNQISHLPAEIGCL, NLKELNVGFNYLKSIPPELGDC, NLERLDCSGNLELMELPFELSNLK, QVTFVDISANKFSSVPICVLR, NLQWLDISSNNLTDLPQDIDRLE, ELQSFLLYKNKLTYLPYSMLNLK, KLTLLVVSGDHLVELPTALCDS, and PLKFVSLMDNPIDNAQCEDGNE.

The chain is Leucine-rich repeat-containing protein 2 (LRRC2) from Homo sapiens (Human).